The primary structure comprises 736 residues: Polyribonucleotide nucleotidyltransferase (736 aa).

Mg(2+) contacts are provided by D493 and D499. In terms of domain architecture, KH spans 560–619 (PQHAELVVNPDAIRMIIGPGGKNIKQITTVTGAAIDINDSGKISIFAPTSEAMEQAKQMI). The 75-residue stretch at 629-703 (GKNYKGKVRK…SRKAVLLEEE (75 aa)) folds into the S1 motif domain. The disordered stretch occupies residues 710 to 736 (EESSRFSKGNRNGDRSRHNNRERTRRT). Residues 720–736 (RNGDRSRHNNRERTRRT) show a composition bias toward basic and acidic residues.

Belongs to the polyribonucleotide nucleotidyltransferase family. Mg(2+) is required as a cofactor.

It localises to the cytoplasm. It carries out the reaction RNA(n+1) + phosphate = RNA(n) + a ribonucleoside 5'-diphosphate. Its function is as follows. Involved in mRNA degradation. Catalyzes the phosphorolysis of single-stranded polyribonucleotides processively in the 3'- to 5'-direction. This is Polyribonucleotide nucleotidyltransferase from Lawsonia intracellularis (strain PHE/MN1-00).